Here is a 446-residue protein sequence, read N- to C-terminus: ATP synthase subunit b-delta (446 aa).

The ATP synthase subunit b stretch occupies residues 1 to 168 (MSTFIGQLFG…PATADVDYPL (168 aa)). A helical transmembrane segment spans residues 4 to 24 (FIGQLFGFAVIVYLVWRFIVP). Residues 169–446 (LAKMRSASRR…LAAAEARLPD (278 aa)) form an ATP synthase subunit delta region.

The protein in the N-terminal section; belongs to the ATPase B chain family. In the C-terminal section; belongs to the ATPase delta chain family. As to quaternary structure, F-type ATPases have 2 components, F(1) - the catalytic core - and F(0) - the membrane proton channel. F(1) has five subunits: alpha(3), beta(3), gamma(1), delta(1), epsilon(1). F(0) has three main subunits: a(1), b(2) and c(10-14). The alpha and beta chains form an alternating ring which encloses part of the gamma chain. F(1) is attached to F(0) by a central stalk formed by the gamma and epsilon chains, while a peripheral stalk is formed by the delta and b chains.

Its subcellular location is the cell membrane. F(1)F(0) ATP synthase produces ATP from ADP in the presence of a proton or sodium gradient. F-type ATPases consist of two structural domains, F(1) containing the extramembraneous catalytic core and F(0) containing the membrane proton channel, linked together by a central stalk and a peripheral stalk. During catalysis, ATP synthesis in the catalytic domain of F(1) is coupled via a rotary mechanism of the central stalk subunits to proton translocation. Functionally, this fusion protein includes a component of the F(0) channel (subunit b) and of the F(1) subunit (subunit delta). Two copies of subunit b and one of delta together form the peripheral 'stator' stalk which links F(1) to F(0). The chain is ATP synthase subunit b-delta (atpFH) from Mycobacterium tuberculosis (strain CDC 1551 / Oshkosh).